Reading from the N-terminus, the 211-residue chain is Superoxide dismutase [Cu-Zn], chloroplastic (211 aa).

Residues 1–57 (MQAILAAAMAAQTLLFSATAPPASLFQSPSSARPFHSLRLAAGPAGAAAARALVVAD) constitute a chloroplast transit peptide. The Cu cation site is built by H103, H105, and H120. C114 and C203 are joined by a disulfide. Zn(2+) is bound by residues H120, H128, H137, and D140. A Cu cation-binding site is contributed by H177.

This sequence belongs to the Cu-Zn superoxide dismutase family. Homotetramer. Cu cation serves as cofactor. It depends on Zn(2+) as a cofactor.

The protein resides in the plastid. It is found in the chloroplast. It carries out the reaction 2 superoxide + 2 H(+) = H2O2 + O2. Functionally, destroys radicals which are normally produced within the cells and which are toxic to biological systems. This Oryza sativa subsp. japonica (Rice) protein is Superoxide dismutase [Cu-Zn], chloroplastic (SODCP).